We begin with the raw amino-acid sequence, 100 residues long: Small ribosomal subunit protein uS14c (100 aa).

It belongs to the universal ribosomal protein uS14 family. As to quaternary structure, part of the 30S ribosomal subunit.

Its subcellular location is the plastid. The protein localises to the chloroplast. Functionally, binds 16S rRNA, required for the assembly of 30S particles. This Ostreococcus tauri protein is Small ribosomal subunit protein uS14c.